The sequence spans 182 residues: Ribosome-recycling factor (182 aa).

Positions 136–156 (VKKQEKDGDFSEDQSRDEQDS) are disordered.

Belongs to the RRF family.

The protein localises to the cytoplasm. In terms of biological role, responsible for the release of ribosomes from messenger RNA at the termination of protein biosynthesis. May increase the efficiency of translation by recycling ribosomes from one round of translation to another. The sequence is that of Ribosome-recycling factor from Synechococcus sp. (strain CC9902).